The primary structure comprises 277 residues: uncharacterized protein (277 aa).

This is an uncharacterized protein from Methanocaldococcus jannaschii (strain ATCC 43067 / DSM 2661 / JAL-1 / JCM 10045 / NBRC 100440) (Methanococcus jannaschii).